The following is a 131-amino-acid chain: Dihydroneopterin aldolase 2 (131 aa).

Substrate is bound by residues E29, Y61, and 80 to 81 (LE). K107 acts as the Proton donor/acceptor in catalysis.

The protein belongs to the DHNA family. In terms of assembly, homooctamer. Forms a hollow cylinder assembled from two ring-shaped tetramers. In terms of tissue distribution, expressed in roots, leaves, stems and siliques.

It carries out the reaction 7,8-dihydroneopterin = 6-hydroxymethyl-7,8-dihydropterin + glycolaldehyde. Its pathway is cofactor biosynthesis; tetrahydrofolate biosynthesis; 2-amino-4-hydroxy-6-hydroxymethyl-7,8-dihydropteridine diphosphate from 7,8-dihydroneopterin triphosphate: step 3/4. In terms of biological role, catalyzes the conversion of 7,8-dihydroneopterin into 6-hydroxymethyl-7,8-dihydropterin, a biosynthetic precursor of the vitamin tetrahydrofolate. Can use L-threo-dihydroneopterin and D-erythro-dihydroneopterin as substrates for the formation of 6-hydroxymethyldihydropterin, but it can also catalyze the epimerization of carbon 2' of dihydroneopterin and dihydromonapterin. The chain is Dihydroneopterin aldolase 2 from Arabidopsis thaliana (Mouse-ear cress).